Reading from the N-terminus, the 120-residue chain is ATP-dependent Clp protease adapter protein ClpS (120 aa).

The interval 9-32 is disordered; that stretch reads LTFNQDHPAEHEDDSSGIAVQESK.

Belongs to the ClpS family. In terms of assembly, binds to the N-terminal domain of the chaperone ClpA.

Functionally, involved in the modulation of the specificity of the ClpAP-mediated ATP-dependent protein degradation. In Ectopseudomonas mendocina (strain ymp) (Pseudomonas mendocina), this protein is ATP-dependent Clp protease adapter protein ClpS.